Consider the following 118-residue polypeptide: MAWSSLLLTLLAHCTGSWAQSVLTQPPSVSGAPGQRVTISCTGSSSNIGAGYVVHWYQQLPGTAPKLLIYGNSNRPSGVPDQFSGSKSGTSASLAITGLQSEDEADYYCKAWDNSLNA.

Positions 1–19 (MAWSSLLLTLLAHCTGSWA) are cleaved as a signal peptide. The segment at 20-44 (QSVLTQPPSVSGAPGQRVTISCTGS) is framework-1. The 99-residue stretch at 20–118 (QSVLTQPPSV…CKAWDNSLNA (99 aa)) folds into the Ig-like domain. Cys-41 and Cys-109 are disulfide-bonded. The complementarity-determining-1 stretch occupies residues 45–53 (SSNIGAGYV). The segment at 54-70 (VHWYQQLPGTAPKLLIY) is framework-2. The tract at residues 71–73 (GNS) is complementarity-determining-2. The tract at residues 74-109 (NRPSGVPDQFSGSKSGTSASLAITGLQSEDEADYYC) is framework-3. A complementarity-determining-3 region spans residues 110-118 (KAWDNSLNA).

Immunoglobulins are composed of two identical heavy chains and two identical light chains; disulfide-linked.

The protein resides in the secreted. The protein localises to the cell membrane. Probable non-functional open reading frame (ORF) of V region of the variable domain of immunoglobulin light chains. Non-functional ORF generally cannot participate in the synthesis of a productive immunoglobulin chain due to altered V-(D)-J or switch recombination and/or splicing site (at mRNA level) and/or conserved amino acid change (protein level). Immunoglobulins, also known as antibodies, are membrane-bound or secreted glycoproteins produced by B lymphocytes. In the recognition phase of humoral immunity, the membrane-bound immunoglobulins serve as receptors which, upon binding of a specific antigen, trigger the clonal expansion and differentiation of B lymphocytes into immunoglobulins-secreting plasma cells. Secreted immunoglobulins mediate the effector phase of humoral immunity, which results in the elimination of bound antigens. The antigen binding site is formed by the variable domain of one heavy chain, together with that of its associated light chain. Thus, each immunoglobulin has two antigen binding sites with remarkable affinity for a particular antigen. The variable domains are assembled by a process called V-(D)-J rearrangement and can then be subjected to somatic hypermutations which, after exposure to antigen and selection, allow affinity maturation for a particular antigen. The chain is Probable non-functional immunoglobulin lambda variable 1-50 from Homo sapiens (Human).